The following is a 180-amino-acid chain: Large ribosomal subunit protein uL6 (180 aa).

It belongs to the universal ribosomal protein uL6 family. As to quaternary structure, part of the 50S ribosomal subunit.

In terms of biological role, this protein binds to the 23S rRNA, and is important in its secondary structure. It is located near the subunit interface in the base of the L7/L12 stalk, and near the tRNA binding site of the peptidyltransferase center. In Caldanaerobacter subterraneus subsp. tengcongensis (strain DSM 15242 / JCM 11007 / NBRC 100824 / MB4) (Thermoanaerobacter tengcongensis), this protein is Large ribosomal subunit protein uL6.